A 183-amino-acid polypeptide reads, in one-letter code: Adenine phosphoribosyltransferase (183 aa).

This sequence belongs to the purine/pyrimidine phosphoribosyltransferase family. In terms of assembly, homodimer.

It localises to the cytoplasm. The catalysed reaction is AMP + diphosphate = 5-phospho-alpha-D-ribose 1-diphosphate + adenine. The protein operates within purine metabolism; AMP biosynthesis via salvage pathway; AMP from adenine: step 1/1. Catalyzes a salvage reaction resulting in the formation of AMP, that is energically less costly than de novo synthesis. The polypeptide is Adenine phosphoribosyltransferase (Citrobacter koseri (strain ATCC BAA-895 / CDC 4225-83 / SGSC4696)).